Here is a 146-residue protein sequence, read N- to C-terminus: MLLQGTHRIGRMAMLLALADQNESPVLSIPKGWKYCTGKVGSMNSQKVVAAMETAAKSNQVIETDVYRETHALYHAIMEALYGVTRGQIQLADVLRTVGLRFAIVRGTPYDGKKEGEWVAVALYGTIGAPVKGSEHEAIGLGINHI.

It belongs to the HutP family. Homohexamer.

Its function is as follows. Antiterminator that binds to cis-acting regulatory sequences on the mRNA in the presence of histidine, thereby suppressing transcription termination and activating the hut operon for histidine utilization. This is Hut operon positive regulatory protein from Bacillus cereus (strain AH820).